The sequence spans 217 residues: 3,4-dihydroxy-2-butanone 4-phosphate synthase (217 aa).

Residues 37–38 (RE), Asp42, 150–154 (RRGHT), and Glu174 each bind D-ribulose 5-phosphate. A Mg(2+)-binding site is contributed by Glu38. His153 is a Mg(2+) binding site.

It belongs to the DHBP synthase family. Homodimer. The cofactor is Mg(2+). Mn(2+) is required as a cofactor.

The enzyme catalyses D-ribulose 5-phosphate = (2S)-2-hydroxy-3-oxobutyl phosphate + formate + H(+). It participates in cofactor biosynthesis; riboflavin biosynthesis; 2-hydroxy-3-oxobutyl phosphate from D-ribulose 5-phosphate: step 1/1. Its function is as follows. Catalyzes the conversion of D-ribulose 5-phosphate to formate and 3,4-dihydroxy-2-butanone 4-phosphate. This is 3,4-dihydroxy-2-butanone 4-phosphate synthase from Shewanella putrefaciens (strain CN-32 / ATCC BAA-453).